A 1070-amino-acid chain; its full sequence is MLGDGNEGISTIPGFNQIQFEGFCRFIDQGLTEELYKFPKIEDTDQEIEFQLFVETYQLVEPLIKERDAVYESLTYSSELYVSAGLIWKNSRDMQEQTIFIGNIPLMNSLGTSIVNGIYRIVINQILQSPGIYYRSELDHNGISVYTGTIISDWGGRSELEIDRKARIWARVSRKQKISILVLSSAMGLNLREILENVCYPEIFLSFLNDKERKKIGSKENSILEFYQQFACVGGDPVFSESLCKELQKKFFQQRCELGRIGRRNMNRKLNLDIPQNNTFLLPRDILAAADHLIGLKFGMGALDDMNHLKNKRIRSVADLLQDQFGLALVRLENVVRGTICGAIRHKLIPTPQNLVTSPPLTTTYESFFGLHPLSQVLDRTNPLTQIVHGRKLSYLGPGGLTGRTASFRIRDIHPSHYGRICPIDTSEGINVGLIGSLSIHARIGHWGSLESPFYEISERSTGVRMLYLSPGSDEYYMVAAGNSLALNRDIQEEQVVPARYRQEFLTIAWEQVHLRSIFPFQYFSIGASLIPFIEHNDANRALMSSNMQRQAVPLSRSEKCIVGTGLERQAALDSGALAIAEREGRIVYTNTHKILLAGNGDILSIPLVIYQRSNKNTCMHQKFRVPRGKCIKKGQILADGAATVGGELALGKNVLVAYMPWEGYNSEDAVLISERLVYEDIYTSFHIRKYEIHTHVTSQGPEKVTNEIPHLEAHLLRNLDKKGIVMLGSWVETGDILVGKLTPQVVKESSYAPEDRLLRAILGIQVSTSKETCLKLPIGGRGRVIDVRWIQKRGGSSYNPETIRVYISQKREIKVGDKVAGRHGNKGIISKILPRQDMPYLQDGRSVDMVFNPLGVPSRMNVGQIFECSLGLAGSLLDRHYRIAPFDERYEQEASRKLVFSELYEASKQTANPWVFEPEYPGKSRIFDGRTGNPFEQPVIIGKPYILKLIHQVDDKIHGRSSGHYALVTQQPLRGRAKQGGQRVGEMEVWALEGFGVAHILQEMLTYKSDHIRARQEVLGTTIIGGTIPNPEDAPESFRLLVRELRSLALELNHFLVSEKNFQINRKEA.

Belongs to the RNA polymerase beta chain family. In terms of assembly, in plastids the minimal PEP RNA polymerase catalytic core is composed of four subunits: alpha, beta, beta', and beta''. When a (nuclear-encoded) sigma factor is associated with the core the holoenzyme is formed, which can initiate transcription.

The protein resides in the plastid. The protein localises to the chloroplast. The enzyme catalyses RNA(n) + a ribonucleoside 5'-triphosphate = RNA(n+1) + diphosphate. Functionally, DNA-dependent RNA polymerase catalyzes the transcription of DNA into RNA using the four ribonucleoside triphosphates as substrates. The sequence is that of DNA-directed RNA polymerase subunit beta from Solanum lycopersicum (Tomato).